Here is a 150-residue protein sequence, read N- to C-terminus: Sulfur-rich protein, serovar D (150 aa).

The next 2 helical transmembrane spans lie at 41 to 61 and 67 to 87; these read VGLV…LVSA and AIYL…VGIL.

It localises to the membrane. This chain is Sulfur-rich protein, serovar D (srp), found in Chlamydia trachomatis serovar D (strain ATCC VR-885 / DSM 19411 / UW-3/Cx).